The primary structure comprises 63 residues: Juvenile hormone esterase, isoform B (63 aa).

The N-linked (GlcNAc...) asparagine glycan is linked to asparagine 20.

It belongs to the type-B carboxylesterase/lipase family. In terms of tissue distribution, fat body, the site of their biosynthesis, and the hemolymph where it is secreted.

The catalysed reaction is juvenile hormone I + H2O = juvenile hormone I carboxylate + methanol + H(+). It carries out the reaction juvenile hormone III + H2O = juvenile hormone III carboxylate + methanol + H(+). Its function is as follows. JH esterase plays a crucial role in the decrease of JH activity in lepidopteran insects, by hydrolyzing the methyl ester of JH. It is also involved in the transport of JH. The sequence is that of Juvenile hormone esterase, isoform B from Trichoplusia ni (Cabbage looper).